We begin with the raw amino-acid sequence, 430 residues long: Tol-Pal system protein TolB (430 aa).

An N-terminal signal peptide occupies residues 1–21 (MKQAFRVALGFLVLWASVLHA).

Belongs to the TolB family. In terms of assembly, the Tol-Pal system is composed of five core proteins: the inner membrane proteins TolA, TolQ and TolR, the periplasmic protein TolB and the outer membrane protein Pal. They form a network linking the inner and outer membranes and the peptidoglycan layer.

The protein localises to the periplasm. Functionally, part of the Tol-Pal system, which plays a role in outer membrane invagination during cell division and is important for maintaining outer membrane integrity. TolB occupies a key intermediary position in the Tol-Pal system because it communicates directly with both membrane-embedded components, Pal in the outer membrane and TolA in the inner membrane. This Yersinia enterocolitica serotype O:8 / biotype 1B (strain NCTC 13174 / 8081) protein is Tol-Pal system protein TolB.